The following is a 193-amino-acid chain: Potassium-transporting ATPase KdpC subunit (193 aa).

A helical membrane pass occupies residues 14–34; that stretch reads ITFTFLVLCGLVYPLIVTGIA.

It belongs to the KdpC family. The system is composed of three essential subunits: KdpA, KdpB and KdpC.

The protein resides in the cell membrane. Part of the high-affinity ATP-driven potassium transport (or Kdp) system, which catalyzes the hydrolysis of ATP coupled with the electrogenic transport of potassium into the cytoplasm. This subunit acts as a catalytic chaperone that increases the ATP-binding affinity of the ATP-hydrolyzing subunit KdpB by the formation of a transient KdpB/KdpC/ATP ternary complex. This Bacillus thuringiensis subsp. konkukian (strain 97-27) protein is Potassium-transporting ATPase KdpC subunit.